The following is a 347-amino-acid chain: Phosphate acyltransferase (347 aa).

Belongs to the PlsX family. In terms of assembly, homodimer. Probably interacts with PlsY.

It localises to the cytoplasm. The enzyme catalyses a fatty acyl-[ACP] + phosphate = an acyl phosphate + holo-[ACP]. It functions in the pathway lipid metabolism; phospholipid metabolism. Catalyzes the reversible formation of acyl-phosphate (acyl-PO(4)) from acyl-[acyl-carrier-protein] (acyl-ACP). This enzyme utilizes acyl-ACP as fatty acyl donor, but not acyl-CoA. The protein is Phosphate acyltransferase of Oleidesulfovibrio alaskensis (strain ATCC BAA-1058 / DSM 17464 / G20) (Desulfovibrio alaskensis).